An 80-amino-acid polypeptide reads, in one-letter code: Large ribosomal subunit protein eL20 (80 aa).

Belongs to the eukaryotic ribosomal protein eL20 family. Part of the 50S ribosomal subunit. Binds 23S rRNA.

The protein is Large ribosomal subunit protein eL20 of Methanopyrus kandleri (strain AV19 / DSM 6324 / JCM 9639 / NBRC 100938).